The primary structure comprises 395 residues: Carbohydrate sulfotransferase 5 (395 aa).

The Cytoplasmic portion of the chain corresponds to 1-7 (MRLPRFS). The helical; Signal-anchor for type II membrane protein transmembrane segment at 8 to 26 (STVMLSLLMVQTGILVFLV) threads the bilayer. Residues 27–395 (SRQVPSSPAG…ASSTEKQPES (369 aa)) lie on the Lumenal side of the membrane. Position 49 to 55 (49 to 55 (WRSGSSF)) interacts with 3'-phosphoadenylyl sulfate. 2 N-linked (GlcNAc...) asparagine glycosylation sites follow: Asn-116 and Asn-142. Residue 202 to 210 (RDPRAVLRS) participates in 3'-phosphoadenylyl sulfate binding. 2 N-linked (GlcNAc...) asparagine glycosylation sites follow: Asn-229 and Asn-305.

Belongs to the sulfotransferase 1 family. Gal/GlcNAc/GalNAc subfamily. Expressed in cornea.

It localises to the golgi apparatus membrane. Functionally, sulfotransferase that utilizes 3'-phospho-5'-adenylyl sulfate (PAPS) as sulfonate donor to catalyze the transfer of sulfate to position 6 of non-reducing N-acetylglucosamine (GlcNAc) residues of keratan. Mediates sulfation of keratan in cornea. Keratan sulfate plays a central role in maintaining corneal transparency. Acts on the non-reducing terminal GlcNAc of short and long carbohydrate substrates that have poly-N-acetyllactosamine structures. May also have activity toward O-linked sugars of mucin-type acceptors. In Mus musculus (Mouse), this protein is Carbohydrate sulfotransferase 5 (Chst5).